The following is a 131-amino-acid chain: Small ribosomal subunit protein bS6m (131 aa).

Belongs to the bacterial ribosomal protein bS6 family. In terms of assembly, component of the mitochondrial small ribosomal subunit (mt-SSU). Mature yeast 74S mitochondrial ribosomes consist of a small (37S) and a large (54S) subunit. The 37S small subunit contains a 15S ribosomal RNA (15S mt-rRNA) and 34 different proteins. The 54S large subunit contains a 21S rRNA (21S mt-rRNA) and 46 different proteins.

It localises to the mitochondrion. Functionally, component of the mitochondrial ribosome (mitoribosome), a dedicated translation machinery responsible for the synthesis of mitochondrial genome-encoded proteins, including at least some of the essential transmembrane subunits of the mitochondrial respiratory chain. The mitoribosomes are attached to the mitochondrial inner membrane and translation products are cotranslationally integrated into the membrane. The chain is Small ribosomal subunit protein bS6m (MRP17) from Saccharomyces cerevisiae (strain ATCC 204508 / S288c) (Baker's yeast).